Here is a 764-residue protein sequence, read N- to C-terminus: 5-methyltetrahydropteroyltriglutamate--homocysteine methyltransferase (764 aa).

5-methyltetrahydropteroyltri-L-glutamate contacts are provided by residues 16–19 (RELK) and Lys117. L-homocysteine is bound by residues 442–444 (IGS) and Glu495. L-methionine-binding positions include 442-444 (IGS) and Glu495. 5-methyltetrahydropteroyltri-L-glutamate contacts are provided by residues 526 to 527 (RC) and Trp572. Asp610 is an L-homocysteine binding site. Asp610 contacts L-methionine. Residue Glu616 coordinates 5-methyltetrahydropteroyltri-L-glutamate. Zn(2+)-binding residues include His652, Cys654, and Glu676. His705 acts as the Proton donor in catalysis. Cys737 is a Zn(2+) binding site.

The protein belongs to the vitamin-B12 independent methionine synthase family. Zn(2+) is required as a cofactor.

It carries out the reaction 5-methyltetrahydropteroyltri-L-glutamate + L-homocysteine = tetrahydropteroyltri-L-glutamate + L-methionine. It participates in amino-acid biosynthesis; L-methionine biosynthesis via de novo pathway; L-methionine from L-homocysteine (MetE route): step 1/1. Its function is as follows. Catalyzes the transfer of a methyl group from 5-methyltetrahydrofolate to homocysteine resulting in methionine formation. This Bordetella pertussis (strain Tohama I / ATCC BAA-589 / NCTC 13251) protein is 5-methyltetrahydropteroyltriglutamate--homocysteine methyltransferase.